A 496-amino-acid polypeptide reads, in one-letter code: L-arabinose isomerase (496 aa).

Residues Glu306, Glu331, His348, and His447 each contribute to the Mn(2+) site.

It belongs to the arabinose isomerase family. Requires Mn(2+) as cofactor.

It carries out the reaction beta-L-arabinopyranose = L-ribulose. The protein operates within carbohydrate degradation; L-arabinose degradation via L-ribulose; D-xylulose 5-phosphate from L-arabinose (bacterial route): step 1/3. In terms of biological role, catalyzes the conversion of L-arabinose to L-ribulose. In Geobacillus kaustophilus (strain HTA426), this protein is L-arabinose isomerase.